The following is a 391-amino-acid chain: 1-deoxy-D-xylulose 5-phosphate reductoisomerase (391 aa).

NADPH is bound at residue asparagine 109. Lysine 110 contributes to the 1-deoxy-D-xylulose 5-phosphate binding site. Glutamate 111 contacts NADPH. Residue aspartate 135 coordinates Mn(2+). 4 residues coordinate 1-deoxy-D-xylulose 5-phosphate: serine 136, glutamate 137, serine 171, and histidine 194. Residue glutamate 137 participates in Mn(2+) binding. Glycine 200 contributes to the NADPH binding site. Residues serine 207, asparagine 212, arginine 213, and glutamate 216 each contribute to the 1-deoxy-D-xylulose 5-phosphate site. Glutamate 216 contacts Mn(2+).

The protein belongs to the DXR family. As to quaternary structure, homodimer. Mg(2+) is required as a cofactor. Mn(2+) serves as cofactor.

It carries out the reaction 2-C-methyl-D-erythritol 4-phosphate + NADP(+) = 1-deoxy-D-xylulose 5-phosphate + NADPH + H(+). It functions in the pathway isoprenoid biosynthesis; isopentenyl diphosphate biosynthesis via DXP pathway; isopentenyl diphosphate from 1-deoxy-D-xylulose 5-phosphate: step 1/6. In terms of biological role, catalyzes the NADPH-dependent rearrangement and reduction of 1-deoxy-D-xylulose-5-phosphate (DXP) to 2-C-methyl-D-erythritol 4-phosphate (MEP). This Blochmanniella floridana protein is 1-deoxy-D-xylulose 5-phosphate reductoisomerase.